The primary structure comprises 373 residues: MAGLSLEFTVNTWNLRSLSQVPCPLRHGFRFPRRLTRRRTILMCSDSSSQSWNVPVLSSYEVGERLKLARGGQQFLAMYSSVVDGITTDPAAMVLPLDDHMVHRGHGVFDTALIINGYLYELDQHLDRILRSASMAKIPLPFDRETIKRILIQTVSVSGCRDGSLRYWLSAGPGDFLLSPSQCLKPTLYAIVIKTNFAINPIGVKVVTSSIPIKPPEFATVKSVNYLPNVLSQMEAEAKGAYAGIWVCKDGFIAEGPNMNVAFVVNGGKELVMPRFDNVLSGCTAKRTLTLAEQLVSKGILKTVKVMDVTVEDGKKADEMMLIGSGIPIRPVIQWDEEFIGEGKEGPIAKALLDLLLEDMRSGPPSVRVLVPY.

The N-terminal 57 residues, 1–57 (MAGLSLEFTVNTWNLRSLSQVPCPLRHGFRFPRRLTRRRTILMCSDSSSQSWNVPVL), are a transit peptide targeting the chloroplast. Arg128 is a binding site for pyridoxal 5'-phosphate. Lys222 functions as the Proton acceptor in the catalytic mechanism. At Lys222 the chain carries N6-(pyridoxal phosphate)lysine. Position 255 (Glu255) interacts with pyridoxal 5'-phosphate.

Belongs to the class-IV pyridoxal-phosphate-dependent aminotransferase family. In terms of assembly, homodimer. Requires pyridoxal 5'-phosphate as cofactor.

It is found in the plastid. It localises to the chloroplast. The catalysed reaction is D-alanine + 2-oxoglutarate = D-glutamate + pyruvate. It catalyses the reaction 4-amino-4-deoxychorismate = 4-aminobenzoate + pyruvate + H(+). The protein operates within cofactor biosynthesis; tetrahydrofolate biosynthesis; 4-aminobenzoate from chorismate: step 2/2. Inhibited by hydroxylamine or amino-oxyacetic acid. Its function is as follows. Amino acid aminotransferase showing activity for D-Asp and D-Ala as amino donors with 2-oxoglutarate as an amino acceptor. Can also use D-Met, D-Tyr, D-Phe, D-Gln, D-Trp and D-Asn as substrates, but no activity with L-Asp, L-Ala, L-Leu, L-Ile or L-Val. Also catalyzes the reverse reaction where an amino group is transferred from D-Glu to pyruvate or oxaloacetate to produce D-Ala or D-Asp, respectively. Also involved in folate biosynthesis, acting as an aminodeoxychorismate lyase converting 4-amino-4-deoxychorismate (ADC) to p-aminobenzoate (PABA). This chain is D-amino-acid transaminase, chloroplastic, found in Arabidopsis thaliana (Mouse-ear cress).